A 672-amino-acid chain; its full sequence is Beta-galactosidase bgaB (672 aa).

Arginine 109 lines the substrate pocket. Cysteine 113 is a Zn(2+) binding site. Residue asparagine 147 participates in substrate binding. Residue glutamate 148 is the Proton donor of the active site. Zn(2+)-binding residues include cysteine 156, cysteine 158, and cysteine 161. Glutamate 303 serves as the catalytic Nucleophile. Residues tryptophan 311 and glutamate 351–histidine 354 each bind substrate.

The protein belongs to the glycosyl hydrolase 42 family.

It catalyses the reaction Hydrolysis of terminal non-reducing beta-D-galactose residues in beta-D-galactosides.. With respect to regulation, by divalent metal ions. Fe(2+), Zn(2+), Cu(2+), Pb(2+) and Sn(2+) inhibit 52, 76.6, 85.3, 100 and 100% of the enzyme activity, respectively. Other metal cations and EDTA do not inhibit this enzyme. Thiol reagents 2-mercaptoethanol and dithiothreitol have no effect on the activity. Sulfhydryl group-blocking reagents p-chloromercuribenzoic acid and iodoacetic acid inhibit 86.2 and 74% of the enzyme activity, respectively. In terms of biological role, hydrolyzes 6-bromo-2-naphthyl-beta-D-galactopyranoside and o-nitrophenyl-beta-D-galactopyranoside (ONPG). Possesses a high level of transgalactosylation activity. Hydrolyzes lactose in milk. The sequence is that of Beta-galactosidase bgaB (bgaB) from Geobacillus kaustophilus.